Here is a 158-residue protein sequence, read N- to C-terminus: Non-secretory ribonuclease (158 aa).

The signal sequence occupies residues 1 to 27 (MVPKLFTSQICLLLLLGLSSLEVSLHA). The C-linked (Man) tryptophan glycan is linked to tryptophan 34. The active-site Proton acceptor is the histidine 42. Position 60 is a 3'-nitrotyrosine (tyrosine 60). 65–69 (KNRNT) contributes to the substrate binding site. N-linked (GlcNAc...) asparagine glycans are attached at residues asparagine 86, asparagine 92, and asparagine 111. The Proton donor role is filled by histidine 153.

This sequence belongs to the pancreatic ribonuclease family. Interacts with and forms a tight 1:1 complex with RNH1. Dimerization of two such complexes may occur.

It is found in the lysosome. The protein resides in the cytoplasmic granule. The catalysed reaction is an [RNA] containing cytidine + H2O = an [RNA]-3'-cytidine-3'-phosphate + a 5'-hydroxy-ribonucleotide-3'-[RNA].. The enzyme catalyses an [RNA] containing uridine + H2O = an [RNA]-3'-uridine-3'-phosphate + a 5'-hydroxy-ribonucleotide-3'-[RNA].. In terms of biological role, this is a non-secretory ribonuclease. It is a pyrimidine specific nuclease with a slight preference for U. Cytotoxin and helminthotoxin. Possesses a wide variety of biological activities. The sequence is that of Non-secretory ribonuclease (RNASE2) from Saguinus labiatus (Red-chested mustached tamarin).